The sequence spans 289 residues: Phosphatidylglycerol--prolipoprotein diacylglyceryl transferase (289 aa).

Transmembrane regions (helical) follow at residues 23–43 (ALHWYGLMYLVGFVFAMWLAV), 61–81 (LLYMGFLGVFVGGRLGYVLFY), 99–119 (GGMSFHGGLMGVICVMLWFAH), 125–145 (FFQVADFIAPLIPFGLGAGRL), 199–219 (SQLYQMMLEGVALFIILNLFI), 226–246 (GSVSGLFLIGYGTFRIITEFF), and 259–279 (LFSMGQILSLPMVIAGILMMV). R144 contributes to the a 1,2-diacyl-sn-glycero-3-phospho-(1'-sn-glycerol) binding site.

Belongs to the Lgt family.

Its subcellular location is the cell inner membrane. The enzyme catalyses L-cysteinyl-[prolipoprotein] + a 1,2-diacyl-sn-glycero-3-phospho-(1'-sn-glycerol) = an S-1,2-diacyl-sn-glyceryl-L-cysteinyl-[prolipoprotein] + sn-glycerol 1-phosphate + H(+). The protein operates within protein modification; lipoprotein biosynthesis (diacylglyceryl transfer). Functionally, catalyzes the transfer of the diacylglyceryl group from phosphatidylglycerol to the sulfhydryl group of the N-terminal cysteine of a prolipoprotein, the first step in the formation of mature lipoproteins. In Pectobacterium carotovorum subsp. carotovorum (strain PC1), this protein is Phosphatidylglycerol--prolipoprotein diacylglyceryl transferase.